Reading from the N-terminus, the 53-residue chain is ATP synthase protein 8 (53 aa).

The chain crosses the membrane as a helical span at residues 9–29 (WLILFFIFSITLVIFNILNYF).

The protein belongs to the ATPase protein 8 family. As to quaternary structure, F-type ATPases have 2 components, CF(1) - the catalytic core - and CF(0) - the membrane proton channel.

Its subcellular location is the mitochondrion membrane. Its function is as follows. Mitochondrial membrane ATP synthase (F(1)F(0) ATP synthase or Complex V) produces ATP from ADP in the presence of a proton gradient across the membrane which is generated by electron transport complexes of the respiratory chain. F-type ATPases consist of two structural domains, F(1) - containing the extramembraneous catalytic core and F(0) - containing the membrane proton channel, linked together by a central stalk and a peripheral stalk. During catalysis, ATP synthesis in the catalytic domain of F(1) is coupled via a rotary mechanism of the central stalk subunits to proton translocation. Part of the complex F(0) domain. Minor subunit located with subunit a in the membrane. In Anopheles quadrimaculatus (Common malaria mosquito), this protein is ATP synthase protein 8 (mt:ATPase8).